We begin with the raw amino-acid sequence, 72 residues long: Translation initiation factor IF-1 (72 aa).

Residues 2–72 (AKEDVIEVEG…TRGRITYRYK (71 aa)) form the S1-like domain. Residue Tyr-60 is modified to Phosphotyrosine.

It belongs to the IF-1 family. As to quaternary structure, component of the 30S ribosomal translation pre-initiation complex which assembles on the 30S ribosome in the order IF-2 and IF-3, IF-1 and N-formylmethionyl-tRNA(fMet); mRNA recruitment can occur at any time during PIC assembly.

The protein resides in the cytoplasm. One of the essential components for the initiation of protein synthesis. Stabilizes the binding of IF-2 and IF-3 on the 30S subunit to which N-formylmethionyl-tRNA(fMet) subsequently binds. Helps modulate mRNA selection, yielding the 30S pre-initiation complex (PIC). Upon addition of the 50S ribosomal subunit IF-1, IF-2 and IF-3 are released leaving the mature 70S translation initiation complex. This is Translation initiation factor IF-1 from Halalkalibacterium halodurans (strain ATCC BAA-125 / DSM 18197 / FERM 7344 / JCM 9153 / C-125) (Bacillus halodurans).